A 938-amino-acid polypeptide reads, in one-letter code: Myocardin (938 aa).

The MEF2C-binding signature appears at 12–27; it reads IRSKFRSVLQLRLQQR. The stretch at 18–43 is one RPEL 1 repeat; it reads SVLQLRLQQRRTQEQLANQGIIPPLK. Over residues 48-61 the composition is skewed to basic and acidic residues; the sequence is FHEQRKHLDSDKAK. Residues 48–68 form a disordered region; that stretch reads FHEQRKHLDSDKAKNSLKRKA. RPEL repeat units lie at residues 62–87 and 106–131; these read NSLK…QAST and DDLN…PVDS. An HDAC5-binding region spans residues 153-205; that stretch reads FEEDSSSDGLSPDQTRSEDPQNSAGSPPDAKASDTPSTGSLGTNQDLASGSEN. The tract at residues 154–281 is disordered; sequence EEDSSSDGLS…DQKAEKSPPP (128 aa). Polar residues-rich tracts occupy residues 159–177, 186–203, and 210–220; these read SDGL…NSAG, DTPS…ASGS, and SASQPSHQSDA. Positions 248–265 are enriched in basic residues; sequence NRHKKPKDPKPKVKKLKY. The region spanning 371 to 405 is the SAP domain; that stretch reads LDDLKVSELRQQLRIRGLPVSGTKTALMDRLRPFQ. A phosphoserine; by GSK3-beta mark is found at S451, S455, S459, and S463. Positions 516–561 form a coiled coil; that stretch reads EKDKMLVEKQKVINELTWKLQQEQRQVEELRMQLQKQKRNNCSEKK. Residues S626, S630, S634, and S638 each carry the phosphoserine; by GSK3-beta modification. Disordered stretches follow at residues 635–678 and 693–734; these read PQHS…SSPI and SDKV…MTRS. Residues 699–715 are compositionally biased toward low complexity; it reads KFSIPSPTFSKSSSAIS. The required for interaction with and ubiquitination by STUB1 stretch occupies residues 717–938; the sequence is VTQPPSYEDA…SSMDLHLQQW (222 aa). A phosphoserine; by MAPK1 and MAPK3 mark is found at S815, S862, and S869. The residue at position 896 (T896) is a Phosphothreonine; by MAPK1 and MAPK3.

Homodimer. Interacts with SRF, its association does not depend on specific DNA sequences for ternary complex formation. Interacts with MLLT7/FOXO4. Interacts (via C-terminal) with EP300 (via the CREB-binding domain). Interacts with HDAC4 and HDAC5. Interacts with MEF2C. Interacts (via C-terminus) with STUB1/CHIP. Interacts with PURB. In terms of processing, ubiquitinated; by STUB1/CHIP at the C-terminus, leading to its degradation by the proteasome. Phosphorylation by GSK3B is required for STUB1/CHIP-mediated ubiquitination. Post-translationally, phosphorylation negatively regulates the intrinsic myocardin transcriptional activity. Phosphorylated; by GSK3B. As to expression, expressed in the heart, aorta and bladder. Expressed in smooth muscle cell-containing tissues: stomach, small intestine, colon, lung, placenta and uterus. Very faint expression in prostate and skeletal muscle.

The protein resides in the nucleus. Functionally, smooth muscle cells (SM) and cardiac muscle cells-specific transcriptional factor which uses the canonical single or multiple CArG boxes DNA sequence. Acts as a cofactor of serum response factor (SRF) with the potential to modulate SRF-target genes. Plays a crucial role in cardiogenesis, urinary bladder development, and differentiation of the smooth muscle cell lineage (myogenesis). Positively regulates the transcription of genes involved in vascular smooth muscle contraction. This Homo sapiens (Human) protein is Myocardin (MYOCD).